The sequence spans 240 residues: Glycerol uptake facilitator protein 3 (240 aa).

The next 2 helical transmembrane spans lie at 11–31 (LGEF…VAGV) and 41–61 (AGWV…VYAS). The short motif at 70 to 72 (NPA) is the NPA 1 element. 3 helical membrane passes run 88–108 (VIPY…VVWL), 137–157 (FWNF…LLAF), and 162–182 (FTAG…GLSL). The NPA 2 signature appears at 191 to 193 (NPA). A helical membrane pass occupies residues 219-239 (WVPIAGPLVGGALGALLFNVL).

Belongs to the MIP/aquaporin (TC 1.A.8) family.

It is found in the cell membrane. Transporter that facilitates the transmembrane diffusion of water, dihydroxyacetone, glycerol and H(2)O(2). Is not permeable to urea and D/L-lactic acid. This chain is Glycerol uptake facilitator protein 3, found in Lactiplantibacillus plantarum (strain ATCC BAA-793 / NCIMB 8826 / WCFS1) (Lactobacillus plantarum).